We begin with the raw amino-acid sequence, 346 residues long: DNA-directed RNA polymerase subunit alpha (346 aa).

The segment at 1–243 is alpha N-terminal domain (alpha-NTD); it reads MTMNNPNLTM…EQLSIWVNFE (243 aa). The alpha C-terminal domain (alpha-CTD) stretch occupies residues 260 to 346; that stretch reads LNENLFRSVE…ERWKAQQAQA (87 aa).

It belongs to the RNA polymerase alpha chain family. As to quaternary structure, homodimer. The RNAP catalytic core consists of 2 alpha, 1 beta, 1 beta' and 1 omega subunit. When a sigma factor is associated with the core the holoenzyme is formed, which can initiate transcription.

It carries out the reaction RNA(n) + a ribonucleoside 5'-triphosphate = RNA(n+1) + diphosphate. In terms of biological role, DNA-dependent RNA polymerase catalyzes the transcription of DNA into RNA using the four ribonucleoside triphosphates as substrates. The protein is DNA-directed RNA polymerase subunit alpha of Sorangium cellulosum (strain So ce56) (Polyangium cellulosum (strain So ce56)).